We begin with the raw amino-acid sequence, 337 residues long: Ribosomal RNA small subunit methyltransferase H (337 aa).

Residues 45–47 (GGH), aspartate 64, histidine 91, aspartate 112, and glutamine 119 each bind S-adenosyl-L-methionine.

This sequence belongs to the methyltransferase superfamily. RsmH family.

The protein resides in the cytoplasm. It catalyses the reaction cytidine(1402) in 16S rRNA + S-adenosyl-L-methionine = N(4)-methylcytidine(1402) in 16S rRNA + S-adenosyl-L-homocysteine + H(+). Its function is as follows. Specifically methylates the N4 position of cytidine in position 1402 (C1402) of 16S rRNA. In Cutibacterium acnes (strain DSM 16379 / KPA171202) (Propionibacterium acnes), this protein is Ribosomal RNA small subunit methyltransferase H.